Consider the following 298-residue polypeptide: Oxygen-dependent coproporphyrinogen-III oxidase (298 aa).

Position 92 (serine 92) interacts with substrate. A divalent metal cation is bound by residues histidine 96 and histidine 106. The active-site Proton donor is histidine 106. 108–110 (NVR) contacts substrate. Residues histidine 145 and histidine 175 each coordinate a divalent metal cation. The segment at 239 to 274 (YVEFNLVYDRGTLFGLQSGGRSESILMSLPPRVRWE) is important for dimerization. 257-259 (GGR) is a substrate binding site.

This sequence belongs to the aerobic coproporphyrinogen-III oxidase family. Homodimer. Requires a divalent metal cation as cofactor.

It localises to the cytoplasm. It carries out the reaction coproporphyrinogen III + O2 + 2 H(+) = protoporphyrinogen IX + 2 CO2 + 2 H2O. It functions in the pathway porphyrin-containing compound metabolism; protoporphyrin-IX biosynthesis; protoporphyrinogen-IX from coproporphyrinogen-III (O2 route): step 1/1. Functionally, involved in the heme biosynthesis. Catalyzes the aerobic oxidative decarboxylation of propionate groups of rings A and B of coproporphyrinogen-III to yield the vinyl groups in protoporphyrinogen-IX. The sequence is that of Oxygen-dependent coproporphyrinogen-III oxidase from Stenotrophomonas maltophilia (strain R551-3).